Here is a 241-residue protein sequence, read N- to C-terminus: UDP-2,3-diacylglucosamine hydrolase (241 aa).

Mn(2+) contacts are provided by Asp-8, His-10, Asp-41, Asn-79, and His-114. 79-80 (NR) lines the substrate pocket. Substrate is bound by residues Asp-122, Ser-160, Lys-167, and His-195. Residues His-195 and His-197 each contribute to the Mn(2+) site.

This sequence belongs to the LpxH family. Mn(2+) serves as cofactor.

The protein localises to the cell inner membrane. It carries out the reaction UDP-2-N,3-O-bis[(3R)-3-hydroxytetradecanoyl]-alpha-D-glucosamine + H2O = 2-N,3-O-bis[(3R)-3-hydroxytetradecanoyl]-alpha-D-glucosaminyl 1-phosphate + UMP + 2 H(+). It participates in glycolipid biosynthesis; lipid IV(A) biosynthesis; lipid IV(A) from (3R)-3-hydroxytetradecanoyl-[acyl-carrier-protein] and UDP-N-acetyl-alpha-D-glucosamine: step 4/6. Functionally, hydrolyzes the pyrophosphate bond of UDP-2,3-diacylglucosamine to yield 2,3-diacylglucosamine 1-phosphate (lipid X) and UMP by catalyzing the attack of water at the alpha-P atom. Involved in the biosynthesis of lipid A, a phosphorylated glycolipid that anchors the lipopolysaccharide to the outer membrane of the cell. This chain is UDP-2,3-diacylglucosamine hydrolase, found in Azotobacter vinelandii (strain DJ / ATCC BAA-1303).